The primary structure comprises 147 residues: uncharacterized protein (147 aa).

Positions 11-147 constitute an HTH marR-type domain; that stretch reads NTSPGFLLWQ…SGLQELLKHE (137 aa). Residues 61–84 constitute a DNA-binding region (H-T-H motif); the sequence is QKKLASFSQTNIMMVSEVVRTLEK.

This is an uncharacterized protein from Bacillus subtilis (strain 168).